We begin with the raw amino-acid sequence, 431 residues long: Enolase (431 aa).

Position 166 (Q166) interacts with (2R)-2-phosphoglycerate. E208 acts as the Proton donor in catalysis. Mg(2+) is bound by residues D245, E288, and D315. Residues K340, R369, S370, and K391 each coordinate (2R)-2-phosphoglycerate. K340 serves as the catalytic Proton acceptor.

The protein belongs to the enolase family. It depends on Mg(2+) as a cofactor.

The protein localises to the cytoplasm. The protein resides in the secreted. It localises to the cell surface. It carries out the reaction (2R)-2-phosphoglycerate = phosphoenolpyruvate + H2O. It functions in the pathway carbohydrate degradation; glycolysis; pyruvate from D-glyceraldehyde 3-phosphate: step 4/5. In terms of biological role, catalyzes the reversible conversion of 2-phosphoglycerate (2-PG) into phosphoenolpyruvate (PEP). It is essential for the degradation of carbohydrates via glycolysis. In Clostridium botulinum (strain ATCC 19397 / Type A), this protein is Enolase.